The sequence spans 261 residues: Glutamate racemase (261 aa).

Substrate contacts are provided by residues Asp9–Ser10 and Tyr41–Gly42. Cys73 functions as the Proton donor/acceptor in the catalytic mechanism. A substrate-binding site is contributed by Asn74–Thr75. Residue Cys179 is the Proton donor/acceptor of the active site. Thr180–His181 contributes to the substrate binding site.

It belongs to the aspartate/glutamate racemases family.

It catalyses the reaction L-glutamate = D-glutamate. It functions in the pathway cell wall biogenesis; peptidoglycan biosynthesis. In terms of biological role, provides the (R)-glutamate required for cell wall biosynthesis. The sequence is that of Glutamate racemase from Aliivibrio fischeri (strain MJ11) (Vibrio fischeri).